Consider the following 680-residue polypeptide: MYSWKSKFKFGKSKEEKEAKHSGFFHSSKKEEQQNNQATAGEHDASITRSSLDRKGTINPSNSSVVPVRVSYDASSSTSTVRDSNGGNSENTNSSQNLDETANIGSTGTPNDATSSSGMMTIKVYNGDDFILPFPITSSEQILNKLLASGVPPPHKEISKEVDALIAQLSRVQIKNQGPADEDLISSESAAKFIPSTIMLPGSSTLNPLLYFTIEFDNTVATIEAEYGTIAKPGFNKISTFDVTRKLPYLKIDVFARIPSILLPSKTWQQEMGLQDEKLQTIFDKINSNQDIHLDSFHLPINLSFDSAASIRLYNHHWITLDNGLGKINISIDYKPSRNKPLSIDDFDLLKVIGKGSFGKVMQVRKKDTQKVYALKAIRKSYIVSKSEVTHTLAERTVLARVDCPFIVPLKFSFQSPEKLYFVLAFINGGELFYHLQKEGRFDLSRARFYTAELLCALDNLHKLDVVYRDLKPENILLDYQGHIALCDFGLCKLNMKDDDKTDTFCGTPEYLAPELLLGLGYTKAVDWWTLGVLLYEMLTGLPPYYDEDVPKMYKKILQEPLVFPDGFDRDAKDLLIGLLSRDPTRRLGYNGADEIRNHPFFSQLSWKRLLMKGYIPPYKPAVSNSMDTSNFDEEFTREKPIDSVVDEYLSESVQKQFGGWTYVGNEQLGSSMVQGRSIR.

A compositionally biased stretch (basic residues) spans 1–11 (MYSWKSKFKFG). The disordered stretch occupies residues 1 to 117 (MYSWKSKFKF…GTPNDATSSS (117 aa)). Basic and acidic residues-rich tracts occupy residues 12–21 (KSKEEKEAKH) and 41–56 (GEHD…DRKG). Position 57 is a phosphothreonine (threonine 57). A compositionally biased stretch (low complexity) spans 59-71 (NPSNSSVVPVRVS). A phosphoserine mark is found at serine 61, serine 64, and serine 71. A compositionally biased stretch (polar residues) spans 73 to 83 (DASSSTSTVRD). Residues 84–97 (SNGGNSENTNSSQN) are compositionally biased toward low complexity. Residues 98-117 (LDETANIGSTGTPNDATSSS) are compositionally biased toward polar residues. Phosphoserine is present on serine 170. Residues 347-602 (FDLLKVIGKG…ADEIRNHPFF (256 aa)) form the Protein kinase domain. ATP is bound by residues 353-361 (IGKGSFGKV) and lysine 376. The active-site Proton acceptor is aspartate 470. Position 502 is a phosphothreonine (threonine 502). Threonine 504 is modified (phosphothreonine; by PKH1). An AGC-kinase C-terminal domain is found at 603-673 (SQLSWKRLLM…VGNEQLGSSM (71 aa)). A phosphoserine mark is found at serine 644 and serine 653. Threonine 662 carries the phosphothreonine; by PKH1 modification. Position 671 is a phosphoserine (serine 671).

It belongs to the protein kinase superfamily. AGC Ser/Thr protein kinase family. RAC subfamily. Post-translationally, autophosphorylated. Phytosphingosine level stimulates phosphorylation by PKH1. The N-terminal half is phosphorylated by FPK1. Phosphorylation is inhibited by exogenous addition of phytosphingosine.

The protein resides in the cytoplasm. It is found in the cell membrane. The catalysed reaction is L-seryl-[protein] + ATP = O-phospho-L-seryl-[protein] + ADP + H(+). The enzyme catalyses L-threonyl-[protein] + ATP = O-phospho-L-threonyl-[protein] + ADP + H(+). Its activity is regulated as follows. Activated by phytosphingosine (PHS), a sphingoid long chain base. Activated by PKH1 phosphorylation. Functionally, plays an essential role in the proliferation of yeast cells. Involved in a signaling pathway, required for optimal cell wall integrity, that acts in parallel with the PKC1-SLT2-dependent pathway. Downstream kinase in the sphingolipid-mediated signaling pathway. Phosphorylation is regulated by the intracellular sphingolipid concentration. Disruption or inhibition of sphingolipid synthesis leads to the activation and phosphorylation of YPK1 through the TORC2 and PKH1 pathways, which in turn phosphorylates ORM1 and LAG1 to activate sphingolipid synthesis. Cooperates with SLI1 in mediating resistance to the sphingolipid biosynthesis inhibitor drug myriocin (ISP-1); kinase activity is essential for the resistance. Required for both receptor-mediated and fluid-phase endocytosis, but is not necessary for receptor phosphorylation or ubiquitination. Necessary for the internalization of plasma membrane proteins carrying different types of internalization signals. Acts downstream of the PKH kinases to control endocytosis by phosphorylating components of the endocytic machinery. Phosphorylation of residue Thr-504 in the activation loop and residue Thr-662 are essential for activity. Phosphorylates and down-regulates flippase activator FPK1. The protein is Serine/threonine-protein kinase YPK1 (YPK1) of Saccharomyces cerevisiae (strain ATCC 204508 / S288c) (Baker's yeast).